The sequence spans 252 residues: MAADETSTDFGFARVPLDEKQGRVNEVFRSVARRYDVMNDLMSGGLHRAWKSALISALRPSRTRPFRLLDVAGGTGDIAFRALQAGGPETHVTVLDINDAMLAVGRERAGDRFAGRIDFVAGNAEALPLPDGSFDAYTIAFGIRNVPRIERALAEAYRVLQPGGRFLCLEFSHVDVPGLDRIYDAYSFRIIPHLGALVAGDRESYRYLVESIRRFPTPGAFAGMIEEAGFAHVTHRLLSGGICAIHSGWKIA.

Residues Thr75, Asp96, and 123-124 (NA) each bind S-adenosyl-L-methionine.

This sequence belongs to the class I-like SAM-binding methyltransferase superfamily. MenG/UbiE family.

It carries out the reaction a 2-demethylmenaquinol + S-adenosyl-L-methionine = a menaquinol + S-adenosyl-L-homocysteine + H(+). The enzyme catalyses a 2-methoxy-6-(all-trans-polyprenyl)benzene-1,4-diol + S-adenosyl-L-methionine = a 5-methoxy-2-methyl-3-(all-trans-polyprenyl)benzene-1,4-diol + S-adenosyl-L-homocysteine + H(+). It participates in quinol/quinone metabolism; menaquinone biosynthesis; menaquinol from 1,4-dihydroxy-2-naphthoate: step 2/2. It functions in the pathway cofactor biosynthesis; ubiquinone biosynthesis. Functionally, methyltransferase required for the conversion of demethylmenaquinol (DMKH2) to menaquinol (MKH2) and the conversion of 2-polyprenyl-6-methoxy-1,4-benzoquinol (DDMQH2) to 2-polyprenyl-3-methyl-6-methoxy-1,4-benzoquinol (DMQH2). The chain is Ubiquinone/menaquinone biosynthesis C-methyltransferase UbiE from Methylobacterium nodulans (strain LMG 21967 / CNCM I-2342 / ORS 2060).